Consider the following 66-residue polypeptide: Large ribosomal subunit protein uL29 (66 aa).

The protein belongs to the universal ribosomal protein uL29 family. Part of the 50S ribosomal subunit.

This Thermococcus kodakarensis (strain ATCC BAA-918 / JCM 12380 / KOD1) (Pyrococcus kodakaraensis (strain KOD1)) protein is Large ribosomal subunit protein uL29.